We begin with the raw amino-acid sequence, 330 residues long: Ketol-acid reductoisomerase (NADP(+)) (330 aa).

Positions 1-181 constitute a KARI N-terminal Rossmann domain; sequence MKVFYDSDFK…GLSRAGVIQT (181 aa). NADP(+)-binding positions include 24 to 27, R47, S52, and 82 to 85; these read YGSQ and DELQ. H107 is a catalytic residue. Residue G133 coordinates NADP(+). A KARI C-terminal knotted domain is found at 182–327; it reads TFKEETETDL…AKLRKMCGLE (146 aa). The Mg(2+) site is built by D190, E194, E226, and E230. Residue S251 coordinates substrate.

It belongs to the ketol-acid reductoisomerase family. Requires Mg(2+) as cofactor.

It catalyses the reaction (2R)-2,3-dihydroxy-3-methylbutanoate + NADP(+) = (2S)-2-acetolactate + NADPH + H(+). It carries out the reaction (2R,3R)-2,3-dihydroxy-3-methylpentanoate + NADP(+) = (S)-2-ethyl-2-hydroxy-3-oxobutanoate + NADPH + H(+). It participates in amino-acid biosynthesis; L-isoleucine biosynthesis; L-isoleucine from 2-oxobutanoate: step 2/4. Its pathway is amino-acid biosynthesis; L-valine biosynthesis; L-valine from pyruvate: step 2/4. Involved in the biosynthesis of branched-chain amino acids (BCAA). Catalyzes an alkyl-migration followed by a ketol-acid reduction of (S)-2-acetolactate (S2AL) to yield (R)-2,3-dihydroxy-isovalerate. In the isomerase reaction, S2AL is rearranged via a Mg-dependent methyl migration to produce 3-hydroxy-3-methyl-2-ketobutyrate (HMKB). In the reductase reaction, this 2-ketoacid undergoes a metal-dependent reduction by NADPH to yield (R)-2,3-dihydroxy-isovalerate. In Methanococcus maripaludis (strain C6 / ATCC BAA-1332), this protein is Ketol-acid reductoisomerase (NADP(+)).